Consider the following 141-residue polypeptide: Hydroperoxide reductase (141 aa).

Belongs to the OsmC/Ohr family. As to quaternary structure, homodimer.

It is found in the cytoplasm. Functionally, reduces organic and inorganic peroxide substrates. Protects the cell against oxidative stress. This chain is Hydroperoxide reductase, found in Mycoplasma genitalium (strain ATCC 33530 / DSM 19775 / NCTC 10195 / G37) (Mycoplasmoides genitalium).